A 156-amino-acid chain; its full sequence is UPF0039 protein Mb2876c (156 aa).

The 143-residue stretch at 8–150 folds into the N-acetyltransferase domain; it reads VWAKDLDARA…PHVPMLRPGS (143 aa).

It belongs to the UPF0039 (ElaA) family.

The sequence is that of UPF0039 protein Mb2876c from Mycobacterium bovis (strain ATCC BAA-935 / AF2122/97).